The sequence spans 119 residues: Small ribosomal subunit protein uS10 (119 aa).

The protein belongs to the universal ribosomal protein uS10 family. In terms of assembly, component of the 40S small ribosomal subunit.

It localises to the cytoplasm. In terms of biological role, component of the small ribosomal subunit. The ribosome is a large ribonucleoprotein complex responsible for the synthesis of proteins in the cell. This is Small ribosomal subunit protein uS10 (rps20) from Xenopus laevis (African clawed frog).